Here is a 497-residue protein sequence, read N- to C-terminus: Delayed-rectifier potassium channel regulatory subunit KCNS1 (497 aa).

Residues 1–186 (MVSEFPGPGS…LTMENPGYSL (186 aa)) are Cytoplasmic-facing. A helical membrane pass occupies residues 187–208 (PSKLFSCVSIGVVLASIAAMCI). Residues 209–239 (HSLPEYQAREAAAAVAAVAAGRSAEEVRDDP) lie on the Extracellular side of the membrane. Residues 240 to 262 (VLRRLEYFCIAWFSFEVSSRLLL) traverse the membrane as a helical segment. At 263–273 (APSTRNFFCHP) the chain is on the cytoplasmic side. The chain crosses the membrane as a helical span at residues 274–291 (LNLIDIVSVLPFYLTLLA). At 292 to 309 (GAALGDQRGASGEELGDL) the chain is on the extracellular side. Residues 310 to 330 (GKVVQVFRLMRIFRVLKLARH) traverse the membrane as a helical; Voltage-sensor segment. The Cytoplasmic portion of the chain corresponds to 331–345 (STGLRSLGATLKHSY). Residues 346–367 (REVGILLLYLAVGVSVFSGVAY) traverse the membrane as a helical segment. The Extracellular segment spans residues 368-379 (TAEEENEGFHTI). Residues 380–391 (PACWWWGTVSMT) constitute an intramembrane region (helical). The Selectivity filter motif lies at 392 to 397 (TVGYGD). The stretch at 392–399 (TVGYGDVV) is an intramembrane region. Residues 400–406 (PETVGGK) are Extracellular-facing. A helical transmembrane segment spans residues 407-435 (LAASGCILGGILVVALPITIIFNKFSHFY). Topologically, residues 436 to 497 (RRQKALEAAV…PREPAKSHSY (62 aa)) are cytoplasmic. Residues 464–497 (SDVSLETSRDTSQEGRSTDLETQAPREPAKSHSY) are disordered. Over residues 470–482 (TSRDTSQEGRSTD) the composition is skewed to basic and acidic residues.

The protein belongs to the potassium channel family. S (TC 1.A.1.2) subfamily. Kv9.1/KCNS1 sub-subfamily. In terms of assembly, heterotetramer with KCNB1 and KCNB2. Does not form homomultimers. As to expression, detected in brain, but not in the other tissues tested. The highest levels of expression are in olfactory bulb, cerebral cortex, hippocampus, habenula, basolateral amygdaloid nuclei and cerebellum.

Its subcellular location is the cell membrane. Potassium channel regulatory subunit that modulate the delayed rectifier voltage-gated potassium channel activity of KCNB1 and KCNB2 by altering their kinetics, expression levels, and shifting the half-inactivation potential to more polarized values. While it does not form functional channels on its own, it can form functional heterotetrameric channels with KCNB1 and KCNB2. Each regulatory subunit has unique regulatory properties that can lead to extensive inhibition, significant changes in kinetics, and/or substantial shifts in the voltage dependencies of the inactivation process. This Mus musculus (Mouse) protein is Delayed-rectifier potassium channel regulatory subunit KCNS1.